A 201-amino-acid polypeptide reads, in one-letter code: NADH-quinone oxidoreductase subunit C (201 aa).

This sequence belongs to the complex I 30 kDa subunit family. As to quaternary structure, NDH-1 is composed of 14 different subunits. Subunits NuoB, C, D, E, F, and G constitute the peripheral sector of the complex.

It is found in the cell inner membrane. The enzyme catalyses a quinone + NADH + 5 H(+)(in) = a quinol + NAD(+) + 4 H(+)(out). NDH-1 shuttles electrons from NADH, via FMN and iron-sulfur (Fe-S) centers, to quinones in the respiratory chain. The immediate electron acceptor for the enzyme in this species is believed to be ubiquinone. Couples the redox reaction to proton translocation (for every two electrons transferred, four hydrogen ions are translocated across the cytoplasmic membrane), and thus conserves the redox energy in a proton gradient. The protein is NADH-quinone oxidoreductase subunit C of Sinorhizobium medicae (strain WSM419) (Ensifer medicae).